The sequence spans 366 residues: Ribosomal RNA large subunit methyltransferase M (366 aa).

S-adenosyl-L-methionine contacts are provided by residues Ser-188, 221–224 (CPGG), Asp-240, Asp-260, and Asp-277. The active-site Proton acceptor is Lys-306.

The protein belongs to the class I-like SAM-binding methyltransferase superfamily. RNA methyltransferase RlmE family. RlmM subfamily. In terms of assembly, monomer.

The protein resides in the cytoplasm. It carries out the reaction cytidine(2498) in 23S rRNA + S-adenosyl-L-methionine = 2'-O-methylcytidine(2498) in 23S rRNA + S-adenosyl-L-homocysteine + H(+). Functionally, catalyzes the 2'-O-methylation at nucleotide C2498 in 23S rRNA. In Pectobacterium carotovorum subsp. carotovorum (strain PC1), this protein is Ribosomal RNA large subunit methyltransferase M.